Consider the following 52-residue polypeptide: UPF0391 membrane protein ACIAD3602 (52 aa).

2 helical membrane passes run 6 to 26 and 30 to 50; these read IIFA…VAGL and FAVI…ISRG.

This sequence belongs to the UPF0391 family.

The protein localises to the cell membrane. The chain is UPF0391 membrane protein ACIAD3602 from Acinetobacter baylyi (strain ATCC 33305 / BD413 / ADP1).